The sequence spans 197 residues: dCTP deaminase (197 aa).

A dCTP-binding site is contributed by 105 to 110 (RSSIAR). E133 serves as the catalytic Proton donor/acceptor. Residues Y166 and Q177 each contribute to the dCTP site. Residues 172-197 (NKYAGQKDPKPSRLAEELSLEQLRGR) form a disordered region. A compositionally biased stretch (basic and acidic residues) spans 176-187 (GQKDPKPSRLAE).

This sequence belongs to the dCTP deaminase family. Homotrimer.

The enzyme catalyses dCTP + H2O + H(+) = dUTP + NH4(+). It participates in pyrimidine metabolism; dUMP biosynthesis; dUMP from dCTP (dUTP route): step 1/2. Its function is as follows. Catalyzes the deamination of dCTP to dUTP. In Thermomicrobium roseum (strain ATCC 27502 / DSM 5159 / P-2), this protein is dCTP deaminase.